The sequence spans 142 residues: HTH-type transcriptional regulator MntR (142 aa).

One can recognise an HTH dtxR-type domain in the interval 1–63; sequence MPTPSMEDYI…YEKYRGLILT (63 aa). The Mn(2+) site is built by D8, E11, H77, E99, E102, and H103.

The protein belongs to the DtxR/MntR family. In terms of assembly, homodimer.

The protein localises to the cytoplasm. Its activity is regulated as follows. DNA binding is strongly activated by Mn(2+). Central regulator of manganese homeostasis. In Listeria welshimeri serovar 6b (strain ATCC 35897 / DSM 20650 / CCUG 15529 / CIP 8149 / NCTC 11857 / SLCC 5334 / V8), this protein is HTH-type transcriptional regulator MntR.